A 173-amino-acid chain; its full sequence is Crossover junction endodeoxyribonuclease RuvC (173 aa).

Residues Asp-8, Glu-67, and Asp-139 contribute to the active site. Residues Asp-8, Glu-67, and Asp-139 each contribute to the Mg(2+) site.

It belongs to the RuvC family. In terms of assembly, homodimer which binds Holliday junction (HJ) DNA. The HJ becomes 2-fold symmetrical on binding to RuvC with unstacked arms; it has a different conformation from HJ DNA in complex with RuvA. In the full resolvosome a probable DNA-RuvA(4)-RuvB(12)-RuvC(2) complex forms which resolves the HJ. The cofactor is Mg(2+).

Its subcellular location is the cytoplasm. The enzyme catalyses Endonucleolytic cleavage at a junction such as a reciprocal single-stranded crossover between two homologous DNA duplexes (Holliday junction).. Functionally, the RuvA-RuvB-RuvC complex processes Holliday junction (HJ) DNA during genetic recombination and DNA repair. Endonuclease that resolves HJ intermediates. Cleaves cruciform DNA by making single-stranded nicks across the HJ at symmetrical positions within the homologous arms, yielding a 5'-phosphate and a 3'-hydroxyl group; requires a central core of homology in the junction. The consensus cleavage sequence is 5'-(A/T)TT(C/G)-3'. Cleavage occurs on the 3'-side of the TT dinucleotide at the point of strand exchange. HJ branch migration catalyzed by RuvA-RuvB allows RuvC to scan DNA until it finds its consensus sequence, where it cleaves and resolves the cruciform DNA. The chain is Crossover junction endodeoxyribonuclease RuvC from Shewanella amazonensis (strain ATCC BAA-1098 / SB2B).